The sequence spans 338 residues: tRNA(Ile)-lysidine synthase (338 aa).

23–28 (SGGLDS) is a binding site for ATP.

The protein belongs to the tRNA(Ile)-lysidine synthase family.

It is found in the cytoplasm. The catalysed reaction is cytidine(34) in tRNA(Ile2) + L-lysine + ATP = lysidine(34) in tRNA(Ile2) + AMP + diphosphate + H(+). In terms of biological role, ligates lysine onto the cytidine present at position 34 of the AUA codon-specific tRNA(Ile) that contains the anticodon CAU, in an ATP-dependent manner. Cytidine is converted to lysidine, thus changing the amino acid specificity of the tRNA from methionine to isoleucine. This is tRNA(Ile)-lysidine synthase from Helicobacter pylori (strain J99 / ATCC 700824) (Campylobacter pylori J99).